A 427-amino-acid polypeptide reads, in one-letter code: Trigger factor (427 aa).

Positions 163 to 248 constitute a PPIase FKBP-type domain; that stretch reads GDTVVIDFVG…IHEVKAKEVP (86 aa).

Belongs to the FKBP-type PPIase family. Tig subfamily.

The protein resides in the cytoplasm. It catalyses the reaction [protein]-peptidylproline (omega=180) = [protein]-peptidylproline (omega=0). Functionally, involved in protein export. Acts as a chaperone by maintaining the newly synthesized protein in an open conformation. Functions as a peptidyl-prolyl cis-trans isomerase. This Streptococcus suis (strain 05ZYH33) protein is Trigger factor.